The following is a 271-amino-acid chain: High mobility group protein homolog TDP-1 (271 aa).

Positions 8-63 (GPLPTDIEETVITIMREEGVRYITAKILRMRLESKYQMEFGPHKAAIDDIVARAMQ) constitute a DEK-C domain. A disordered region spans residues 75-118 (LKEKDASKSSGGKGSKRARSAGAEAPSKTKKEMTEKPKKPADYP). The span at 101–116 (SKTKKEMTEKPKKPAD) shows a compositional bias: basic and acidic residues. DNA-binding regions (HMG box) lie at residues 118–186 (PKPA…DEYK) and 206–270 (PKRA…AALP).

The protein resides in the nucleus. In terms of biological role, unknown. May play a role in transcription and/or DNA replication. It is not known whether this protein is DNA sequence binding-specific or not. This Trypanosoma brucei rhodesiense protein is High mobility group protein homolog TDP-1.